The following is a 285-amino-acid chain: Probable endonuclease 4 (285 aa).

Zn(2+)-binding residues include H69, H109, E145, D179, H182, H216, D229, H231, and E261.

Belongs to the AP endonuclease 2 family. The cofactor is Zn(2+).

The enzyme catalyses Endonucleolytic cleavage to 5'-phosphooligonucleotide end-products.. Its function is as follows. Endonuclease IV plays a role in DNA repair. It cleaves phosphodiester bonds at apurinic or apyrimidinic (AP) sites, generating a 3'-hydroxyl group and a 5'-terminal sugar phosphate. The polypeptide is Probable endonuclease 4 (Escherichia fergusonii (strain ATCC 35469 / DSM 13698 / CCUG 18766 / IAM 14443 / JCM 21226 / LMG 7866 / NBRC 102419 / NCTC 12128 / CDC 0568-73)).